We begin with the raw amino-acid sequence, 314 residues long: MPLNLPRHLPAIEILKRESIFVMDDLRASAQDIRPLKIVLLNLMPVKIATETDFVRLLSDSPLQVNVVFVKMKEHQSKNTSLEHLMAFYKNFEDICEENYDGMIITGAPLELMNFEEVTYWEELQKIFDWASKHVTSTLYICWAAQAGLYHFYGIPKYSLAKKMFGVFQHTTNGSNVPLFRGFDSEFYVPHSRYTEIRKEDILKVPRLKLLVESKESGVHIVSARCGREIFMTGHAEYAPNTLHNEYQRDLDKGIQTEIPKNYYKDNDSTKDVLVSWVAHANLLFKNWLNYYVYQATPYDPKEIEFLEDLNVKE.

The active-site Acyl-thioester intermediate is Cys142. 2 residues coordinate substrate: Lys163 and Ser192. The active-site Proton acceptor is the His235. Glu237 is an active-site residue. Position 249 (Arg249) interacts with substrate.

It belongs to the MetA family.

The protein localises to the cytoplasm. It catalyses the reaction L-homoserine + acetyl-CoA = O-acetyl-L-homoserine + CoA. Its pathway is amino-acid biosynthesis; L-methionine biosynthesis via de novo pathway; O-acetyl-L-homoserine from L-homoserine: step 1/1. Transfers an acetyl group from acetyl-CoA to L-homoserine, forming acetyl-L-homoserine. In Azobacteroides pseudotrichonymphae genomovar. CFP2, this protein is Homoserine O-acetyltransferase.